We begin with the raw amino-acid sequence, 205 residues long: Ribosomal RNA large subunit methyltransferase E (205 aa).

Residues glycine 50, tryptophan 52, aspartate 67, asparagine 83, and aspartate 111 each contribute to the S-adenosyl-L-methionine site. Lysine 151 serves as the catalytic Proton acceptor.

Belongs to the class I-like SAM-binding methyltransferase superfamily. RNA methyltransferase RlmE family.

It is found in the cytoplasm. It carries out the reaction uridine(2552) in 23S rRNA + S-adenosyl-L-methionine = 2'-O-methyluridine(2552) in 23S rRNA + S-adenosyl-L-homocysteine + H(+). Functionally, specifically methylates the uridine in position 2552 of 23S rRNA at the 2'-O position of the ribose in the fully assembled 50S ribosomal subunit. The protein is Ribosomal RNA large subunit methyltransferase E of Thermoplasma acidophilum (strain ATCC 25905 / DSM 1728 / JCM 9062 / NBRC 15155 / AMRC-C165).